Here is a 150-residue protein sequence, read N- to C-terminus: UPF0178 protein AHA_0543 (150 aa).

Belongs to the UPF0178 family.

The protein is UPF0178 protein AHA_0543 of Aeromonas hydrophila subsp. hydrophila (strain ATCC 7966 / DSM 30187 / BCRC 13018 / CCUG 14551 / JCM 1027 / KCTC 2358 / NCIMB 9240 / NCTC 8049).